The following is a 459-amino-acid chain: GTPase Der (459 aa).

2 consecutive EngA-type G domains span residues Phe3–Glu167 and Ile188–Asn363. GTP is bound by residues Gly9–Ser16, Asp56–Leu60, Asn119–Glu122, Gly194–Ser201, Asp241–Leu245, and Asn306–Asp309. In terms of domain architecture, KH-like spans Thr364–Ala448.

The protein belongs to the TRAFAC class TrmE-Era-EngA-EngB-Septin-like GTPase superfamily. EngA (Der) GTPase family. Associates with the 50S ribosomal subunit.

GTPase that plays an essential role in the late steps of ribosome biogenesis. The chain is GTPase Der from Rhodopseudomonas palustris (strain HaA2).